A 626-amino-acid polypeptide reads, in one-letter code: Ankyrin repeat domain-containing protein 13B (626 aa).

The residue at position 1 (Met1) is an N-acetylmethionine. ANK repeat units follow at residues 47-76 and 80-109; these read RGRT…DVGR and SGWT…YQRV. The tract at residues 442–470 is disordered; sequence PVPSVRGSPGSETPSPGSDSSSVSSSSST. Residues 448 to 470 are compositionally biased toward low complexity; it reads GSPGSETPSPGSDSSSVSSSSST. The 20-residue stretch at 503 to 522 folds into the UIM 1 domain; the sequence is EDDDLLRFAIQQSLLEAGSE. The segment at 534-614 is disordered; sequence NSKPGTHPMS…RRRVRQEEEE (81 aa). Residues 554–575 show a composition bias toward pro residues; that stretch reads PPTPQRQPMPPAPVPSPRPSPG. UIM domains are found at residues 585–604 and 610–626; these read SYDE…QEER and QEEE…LTEQ.

Interacts with EGFR (ubiquitinated); the interaction is direct and may regulate EGFR internalization.

The protein resides in the cell membrane. Its subcellular location is the late endosome. It localises to the early endosome. Functionally, ubiquitin-binding protein that specifically recognizes and binds 'Lys-63'-linked ubiquitin. Does not bind 'Lys-48'-linked ubiquitin. Positively regulates the internalization of ligand-activated EGFR by binding to the Ub moiety of ubiquitinated EGFR at the cell membrane. The protein is Ankyrin repeat domain-containing protein 13B (Ankrd13b) of Mus musculus (Mouse).